A 776-amino-acid polypeptide reads, in one-letter code: Probable E3 ubiquitin-protein ligase HECTD2 (776 aa).

The tract at residues 1–46 (MSEAVRVPSPATPLVVAAAAPEERKGKESEREKLPPIVSAGAGATA) is disordered. A compositionally biased stretch (low complexity) spans 7–20 (VPSPATPLVVAAAA). The residue at position 9 (S9) is a Phosphoserine. The span at 21–34 (PEERKGKESEREKL) shows a compositional bias: basic and acidic residues. The HECT domain maps to 437–776 (KRADLKKKLK…ISNSEGFGLE (340 aa)). The active-site Glycyl thioester intermediate is C744.

It catalyses the reaction S-ubiquitinyl-[E2 ubiquitin-conjugating enzyme]-L-cysteine + [acceptor protein]-L-lysine = [E2 ubiquitin-conjugating enzyme]-L-cysteine + N(6)-ubiquitinyl-[acceptor protein]-L-lysine.. Its pathway is protein modification; protein ubiquitination. E3 ubiquitin-protein ligase which accepts ubiquitin from an E2 ubiquitin-conjugating enzyme in the form of a thioester and then directly transfers the ubiquitin to targeted substrates. This chain is Probable E3 ubiquitin-protein ligase HECTD2 (HECTD2), found in Pongo abelii (Sumatran orangutan).